A 1406-amino-acid chain; its full sequence is DNA-directed RNA polymerase subunit beta' (1406 aa).

4 residues coordinate Zn(2+): Cys72, Cys74, Cys87, and Cys90. Asp462, Asp464, and Asp466 together coordinate Mg(2+). 4 residues coordinate Zn(2+): Cys816, Cys889, Cys896, and Cys899.

The protein belongs to the RNA polymerase beta' chain family. As to quaternary structure, the RNAP catalytic core consists of 2 alpha, 1 beta, 1 beta' and 1 omega subunit. When a sigma factor is associated with the core the holoenzyme is formed, which can initiate transcription. Mg(2+) is required as a cofactor. Requires Zn(2+) as cofactor.

It carries out the reaction RNA(n) + a ribonucleoside 5'-triphosphate = RNA(n+1) + diphosphate. Its function is as follows. DNA-dependent RNA polymerase catalyzes the transcription of DNA into RNA using the four ribonucleoside triphosphates as substrates. The sequence is that of DNA-directed RNA polymerase subunit beta' from Psychrobacter sp. (strain PRwf-1).